The primary structure comprises 256 residues: Ubiquinone/menaquinone biosynthesis C-methyltransferase UbiE (256 aa).

Residues Thr-79, Asp-100, and 128 to 129 (DA) each bind S-adenosyl-L-methionine.

This sequence belongs to the class I-like SAM-binding methyltransferase superfamily. MenG/UbiE family.

It carries out the reaction a 2-demethylmenaquinol + S-adenosyl-L-methionine = a menaquinol + S-adenosyl-L-homocysteine + H(+). It catalyses the reaction a 2-methoxy-6-(all-trans-polyprenyl)benzene-1,4-diol + S-adenosyl-L-methionine = a 5-methoxy-2-methyl-3-(all-trans-polyprenyl)benzene-1,4-diol + S-adenosyl-L-homocysteine + H(+). It participates in quinol/quinone metabolism; menaquinone biosynthesis; menaquinol from 1,4-dihydroxy-2-naphthoate: step 2/2. Its pathway is cofactor biosynthesis; ubiquinone biosynthesis. Functionally, methyltransferase required for the conversion of demethylmenaquinol (DMKH2) to menaquinol (MKH2) and the conversion of 2-polyprenyl-6-methoxy-1,4-benzoquinol (DDMQH2) to 2-polyprenyl-3-methyl-6-methoxy-1,4-benzoquinol (DMQH2). The polypeptide is Ubiquinone/menaquinone biosynthesis C-methyltransferase UbiE (Pseudomonas savastanoi pv. phaseolicola (strain 1448A / Race 6) (Pseudomonas syringae pv. phaseolicola (strain 1448A / Race 6))).